Consider the following 407-residue polypeptide: Phosphopentomutase (407 aa).

Residues Asp-10, Asp-306, His-311, Asp-347, His-348, and His-359 each contribute to the Mn(2+) site.

This sequence belongs to the phosphopentomutase family. The cofactor is Mn(2+).

The protein resides in the cytoplasm. It carries out the reaction 2-deoxy-alpha-D-ribose 1-phosphate = 2-deoxy-D-ribose 5-phosphate. The enzyme catalyses alpha-D-ribose 1-phosphate = D-ribose 5-phosphate. Its pathway is carbohydrate degradation; 2-deoxy-D-ribose 1-phosphate degradation; D-glyceraldehyde 3-phosphate and acetaldehyde from 2-deoxy-alpha-D-ribose 1-phosphate: step 1/2. Its function is as follows. Isomerase that catalyzes the conversion of deoxy-ribose 1-phosphate (dRib-1-P) and ribose 1-phosphate (Rib-1-P) to deoxy-ribose 5-phosphate (dRib-5-P) and ribose 5-phosphate (Rib-5-P), respectively. In Yersinia pseudotuberculosis serotype O:1b (strain IP 31758), this protein is Phosphopentomutase.